A 628-amino-acid chain; its full sequence is MDSKEVSEVPRREVRSFLMARDPSIDRRFRPRPNKKMRLFDNIQESEEESFSEYSDTESEYKYQSSEATEGASCATSAADSSNVETGPQVFLRLRPVKDASKAYIVSEEANVLITSCKVDSTSNNVNRMEKHFGFTSIFDSTVGQRDIYDTCVGPKIMEEECVTIMTYGTSGSGKTYTLLGDDVRAGIIPRALENIFTIYQDTVFRSPKLKLINGSIVFLQDDASLKELQIRKKLLDLCPDISAHHQRLKQVIDGDHMFETKASTDVSVLVWVSFVEIYNELVYDLLAIPPKQDKLGEVPRKNLKIVGNKGHVFIKGLTSVFVTSSEEALRLLRLGQQRSTYASTSVNANSSRSHCVFTVDILKYNRSGITTQSSYKFCDLAGSERVNNTGTSGLRLKEAKNINTSLMVLGRCLDAASTVQKKKNADIIPYRDSKLTMLLQAALLGKEKLAMIVTVTPLDKYYEENLNVLNFASIAKNIIFKEPVIKQHRVSYCGFMEFSKMSTCEGGDYTKELEDENVRLQLEIEQLKYDHVLQMQLLEEKLRRELTATYQEIIQNNKKQYEDECEKKLLIAQRESEFMLSSQRRRYEEQIEDLKDEIEELKNPASDTDISDDPNESKSPIEILDDD.

A disordered region spans residues 28 to 68 (RFRPRPNKKMRLFDNIQESEEESFSEYSDTESEYKYQSSEA). Over residues 44–58 (QESEEESFSEYSDTE) the composition is skewed to acidic residues. A Kinesin motor domain is found at 87-479 (GPQVFLRLRP…LNFASIAKNI (393 aa)). 169 to 176 (GTSGSGKT) contributes to the ATP binding site. Positions 509–612 (DYTKELEDEN…KNPASDTDIS (104 aa)) form a coiled coil. The segment at 596-628 (KDEIEELKNPASDTDISDDPNESKSPIEILDDD) is disordered. Phosphoserine is present on Ser607. Position 609 is a phosphothreonine (Thr609). Ser612 is subject to Phosphoserine.

It belongs to the TRAFAC class myosin-kinesin ATPase superfamily. Kinesin family.

The protein resides in the cytoplasm. It localises to the cytoskeleton. Its function is as follows. Required during female meiosis for bipolar spindle formation in the absence of the centrosomes and chromosome homolog segregation. Also has roles in male meiosis and mitotic divisions of the early embryo. This Drosophila melanogaster (Fruit fly) protein is Kinesin-like protein subito (sub).